The following is a 155-amino-acid chain: MAAGSITTLPALPEDGGSGAFPPGHFKDPKRLYCKNGGFFLRIHPDGRVDGVREKSDPHIKLQLQAEERGVVSIKGVCANRYLAMKEDGRLLASKCVTDECFFFERLESNNYNTYRSRKYSSWYVALKRTGQYKLGPKTGPGQKAILFLPMSAKS.

Residues 1-9 constitute a propeptide that is removed on maturation; sequence MAAGSITTL. Residues 1 to 20 are disordered; the sequence is MAAGSITTLPALPEDGGSGA. Asn-36 serves as a coordination point for heparin. The short motif at 46-48 is the Cell attachment site; atypical element; it reads DGR. Tyr-82 is modified (phosphotyrosine; by TEC). A Cell attachment site; atypical motif is present at residues 88 to 90; it reads DGR. A Glycyl lysine isopeptide (Lys-Gly) (interchain with G-Cter in SUMO1) cross-link involves residue Lys-95. Residues 128 to 144 form a heparin-binding region; it reads KRTGQYKLGPKTGPGQK.

Belongs to the heparin-binding growth factors family. Monomer. Homodimer. Interacts with FGFR1, FGFR2, FGFR3 and FGFR4. Affinity between fibroblast growth factors (FGFs) and their receptors is increased by heparan sulfate glycosaminoglycans that function as coreceptors. Interacts with CSPG4, FGFBP1 and TEC. Found in a complex with FGFBP1, FGF1 and FGF2. Interacts with FGFBP3. Interacts with integrin ITGAV:ITGB3; the interaction is required for FGF2 signaling. Interacts with SNORC (via the extracellular domain). Interacts with glypican GPC3. Post-translationally, phosphorylation at Tyr-82 regulates FGF2 unconventional secretion.

Its subcellular location is the secreted. It localises to the nucleus. Its function is as follows. Acts as a ligand for FGFR1, FGFR2, FGFR3 and FGFR4. Also acts as an integrin ligand which is required for FGF2 signaling. Binds to integrin ITGAV:ITGB3. Plays an important role in the regulation of cell survival, cell division, cell differentiation and cell migration. Functions as a potent mitogen in vitro. Can induce angiogenesis. Mediates phosphorylation of ERK1/2 and thereby promotes retinal lens fiber differentiation. The sequence is that of Fibroblast growth factor 2 (FGF2) from Bos taurus (Bovine).